A 136-amino-acid chain; its full sequence is HTH-type transcriptional regulator LrpA (136 aa).

Positions 2 to 63 (IDEIDKKILD…EVNQVKLGFS (62 aa)) constitute an HTH asnC-type domain. A DNA-binding region (H-T-H motif) is located at residues 21–40 (MKKLGEKVHLTAPATASRVV).

Functionally, negative regulation of glyA transcription and kinB-dependent sporulation. This Bacillus subtilis (strain 168) protein is HTH-type transcriptional regulator LrpA (lrpA).